Consider the following 459-residue polypeptide: MGSKSPEDHRQGPDGGSADAAVTIINPPKSAAASGLLQGMLEGQDEDGDDDDDEKTGINVKTYDGAKKKRKRNKKKSKKVAVIQQTFPPRIPLATLFDNQPYPEGQIVDHVVKDDNIKRTTTEELRHVAALNDMDDDFLKDYRKAAEVHRQVRHHAQTIAKPGVSMTRLAEEIDEGVRALTGHTGLETGDALKAGLAFPTGLCLNHVGAHWTPNAGAKEVILKHDDVLKVDFGVHVNGRIVDSAFTVAANPVYDNLLAAVKAATNTGLGEAGIDARIDHISEAIQEVMESYEVELNGKTIPVKAVRNITGHNILRYRIHGDKQVPFVKTKTDQRMEEGDIFAIETFGSTGKAHLRDDVGVYGYGRNENMSPAVLHQSSAKSLLKTIDANFGTLVFARRQLERLPGVEKYHLGMRTLVNSGLVESYAPLVDITGSYIAQFEHTVLLRPNCKEIISRGDDY.

The span at 1-12 (MGSKSPEDHRQG) shows a compositional bias: basic and acidic residues. Residues 1-79 (MGSKSPEDHR…RKRNKKKSKK (79 aa)) are disordered. Positions 43 to 54 (GQDEDGDDDDDE) are enriched in acidic residues. Basic residues predominate over residues 67–79 (KKKRKRNKKKSKK). Residue His-210 coordinates substrate. Asp-231, Asp-242, and His-311 together coordinate a divalent metal cation. His-319 contributes to the substrate binding site. A divalent metal cation-binding residues include Glu-344 and Glu-440.

The protein belongs to the peptidase M24A family. Methionine aminopeptidase eukaryotic type 2 subfamily. The cofactor is Co(2+). It depends on Zn(2+) as a cofactor. Mn(2+) serves as cofactor. Fe(2+) is required as a cofactor.

The protein resides in the cytoplasm. The enzyme catalyses Release of N-terminal amino acids, preferentially methionine, from peptides and arylamides.. Functionally, cotranslationally removes the N-terminal methionine from nascent proteins. The N-terminal methionine is often cleaved when the second residue in the primary sequence is small and uncharged (Met-Ala-, Cys, Gly, Pro, Ser, Thr, or Val). This is Methionine aminopeptidase 2-1 from Pyrenophora tritici-repentis (strain Pt-1C-BFP) (Wheat tan spot fungus).